The chain runs to 350 residues: N-acetyl-gamma-glutamyl-phosphate reductase (350 aa).

The active site involves cysteine 154.

Belongs to the NAGSA dehydrogenase family. Type 1 subfamily.

The protein resides in the cytoplasm. It catalyses the reaction N-acetyl-L-glutamate 5-semialdehyde + phosphate + NADP(+) = N-acetyl-L-glutamyl 5-phosphate + NADPH + H(+). It participates in amino-acid biosynthesis; L-arginine biosynthesis; N(2)-acetyl-L-ornithine from L-glutamate: step 3/4. In terms of biological role, catalyzes the NADPH-dependent reduction of N-acetyl-5-glutamyl phosphate to yield N-acetyl-L-glutamate 5-semialdehyde. In Corynebacterium efficiens (strain DSM 44549 / YS-314 / AJ 12310 / JCM 11189 / NBRC 100395), this protein is N-acetyl-gamma-glutamyl-phosphate reductase.